The chain runs to 274 residues: Diaminopimelate epimerase (274 aa).

Residues Asn13, Gln47, and Asn65 each contribute to the substrate site. Catalysis depends on Cys74, which acts as the Proton donor. Residues 75–76 (GN), Asn149, Asn182, and 200–201 (ER) each bind substrate. Residue Cys209 is the Proton acceptor of the active site. 210 to 211 (GT) contributes to the substrate binding site.

This sequence belongs to the diaminopimelate epimerase family. As to quaternary structure, homodimer.

The protein resides in the cytoplasm. The enzyme catalyses (2S,6S)-2,6-diaminopimelate = meso-2,6-diaminopimelate. It functions in the pathway amino-acid biosynthesis; L-lysine biosynthesis via DAP pathway; DL-2,6-diaminopimelate from LL-2,6-diaminopimelate: step 1/1. Catalyzes the stereoinversion of LL-2,6-diaminopimelate (L,L-DAP) to meso-diaminopimelate (meso-DAP), a precursor of L-lysine and an essential component of the bacterial peptidoglycan. This chain is Diaminopimelate epimerase, found in Rhizorhabdus wittichii (strain DSM 6014 / CCUG 31198 / JCM 15750 / NBRC 105917 / EY 4224 / RW1) (Sphingomonas wittichii).